A 123-amino-acid chain; its full sequence is Histone H2B (123 aa).

The disordered stretch occupies residues 1 to 32; it reads MPPKAASKGAKKAASKAKAARSTDKKKRRRRR. Over residues 9 to 32 the composition is skewed to basic residues; the sequence is GAKKAASKAKAARSTDKKKRRRRR. O-linked (GlcNAc) serine glycosylation occurs at serine 110. Lysine 118 participates in a covalent cross-link: Glycyl lysine isopeptide (Lys-Gly) (interchain with G-Cter in ubiquitin).

The protein belongs to the histone H2B family. In terms of assembly, the nucleosome is a histone octamer containing two molecules each of H2A, H2B, H3 and H4 assembled in one H3-H4 heterotetramer and two H2A-H2B heterodimers. The octamer wraps approximately 147 bp of DNA. Monoubiquitination of Lys-118 gives a specific tag for epigenetic transcriptional activation and is also prerequisite for histone H3 'Lys-4' and 'Lys-79' methylation.

It is found in the nucleus. The protein resides in the chromosome. In terms of biological role, core component of nucleosome. Nucleosomes wrap and compact DNA into chromatin, limiting DNA accessibility to the cellular machineries which require DNA as a template. Histones thereby play a central role in transcription regulation, DNA repair, DNA replication and chromosomal stability. DNA accessibility is regulated via a complex set of post-translational modifications of histones, also called histone code, and nucleosome remodeling. The chain is Histone H2B from Urechis caupo (Innkeeper worm).